The chain runs to 439 residues: Thymidine phosphorylase (439 aa).

Belongs to the thymidine/pyrimidine-nucleoside phosphorylase family. In terms of assembly, homodimer.

The enzyme catalyses thymidine + phosphate = 2-deoxy-alpha-D-ribose 1-phosphate + thymine. Its pathway is pyrimidine metabolism; dTMP biosynthesis via salvage pathway; dTMP from thymine: step 1/2. The enzymes which catalyze the reversible phosphorolysis of pyrimidine nucleosides are involved in the degradation of these compounds and in their utilization as carbon and energy sources, or in the rescue of pyrimidine bases for nucleotide synthesis. The polypeptide is Thymidine phosphorylase (Mesorhizobium japonicum (strain LMG 29417 / CECT 9101 / MAFF 303099) (Mesorhizobium loti (strain MAFF 303099))).